The chain runs to 171 residues: Calcium-binding protein F-like (171 aa).

EF-hand domains follow at residues 6–41 (KIFE…KMNG), 57–80 (IDMD…KAKK), 89–124 (AALA…RGYT), and 130–159 (DQYL…RRID). Residues aspartate 19, asparagine 21, aspartate 23, serine 25, and aspartate 30 each contribute to the Ca(2+) site. The Ca(2+) site is built by aspartate 102, aspartate 104, aspartate 106, lysine 108, glutamate 113, aspartate 137, aspartate 139, aspartate 141, cysteine 143, and glutamate 148.

The polypeptide is Calcium-binding protein F-like (cbp12) (Dictyostelium discoideum (Social amoeba)).